The primary structure comprises 1374 residues: MSWKERLDNPTLSVWPHDYLRPHAEPFVEQGTYSISIPQLSGDYATLLAAWTALLYRVTGDDDIVLYVRDNKVLRFTITPELTFTQLQNKINEQLAELANVEGTNFDALSESLQKESGLERPPQLFRIACVTEDLQLDRYTHSPLDIGLQLHESSSDVSIVFNKLLFSQDRITILADQLTLFLTSVLQNAKQVFTKVSLITDSSTSILPDPKANLDWCGFVGCIHDIFQDNAEKFPERTCVVETPPINSTKTRTFTYKDINEASNIVAHYLINTGIKRGDVVMIYSSRGVDLMVCVMGVLKAGATFSVIDPAYPPARQTIYLGVAKPKGLIVIRAAGQLDQLVEDYITKELDLVSRIPSIAIQDNGTVEGGSLPSESGDVLASYTELKSTRTGVVVGPDSNPTLSFTSGSEGIPKGVLGRHFSLAYYFSWMAKQFNLSENDKFTMLSGIAHDPIQRDMFTPLFLGAQLYVPTQDDIGTPGRLAEWMGKYGCTVTHLTPAMGQLLTAQAVTPFPKLHHAFFVGDILTKRDCLRLQTLAENCCIVNMYGTTETQRAVSYFEVTSRSQDPHFLKKLKDVMPAGRGMKNVQLLVVNRNDRTQVCGVGEIGEIYVRAGGLAEGYRGLPDLNKEKFVNNWFVEEGHWNYLDKDLEAPWKEFWQGPRDRLYRTGDLGRYLPNGDCECCGRADDQVKIRGFRIELGEIDTNISQHPLVRENITLVRNNLEGEKCLVTYMVPRFDKPELENFKIEVPSNISDDPVVCGLIGYSPFTKDLKAFLKKRLASYAIPSLIIVLPKLPLNPNGKVDKPKLQFPTVKQLELVAKNSSIDINDSEFNQQEREIRDLWLECLPTKPTSISPEDSFFDLGGHSILATKMIFTVKKQLNVELPLGTIFKYPTIKAFAAEVSRLKSTDKIEEETTALTADYASDAASLIDTLPKSYPAARALGSPSEMAGPTTVNIFVTGVTGFLGSFILSDILNRTVTGVNFKIFAHVRAADETSGLDRIRKAGTVYGTWKEEYANSLQVVIGDLSKKNFGLTDDKWSHLSETIDIIIHNGALVHWVYPYSKLRNANVVSTINIMNLASEGKPKLFNFVSSTSVLDTNHYFELSDKLQQSGKEGIPESDDLMGSSLGLTSGYGQSKWAAEHIIRAAGKRGLRGSIIRPGYVTGASYNGSSNTDDFLLRFLKSAVQLGKIPDINNTVNMVPVDQVARVVVAASINPPCGDDLCVVHVNAHPRIIFKDYLYELKNYGYDVEIENYEQWKKTLEEAVIERSEDNALFPLLHMVLGDLEDSTKAPELDDKNAITSLRADIEWTNEDRTKGMGATPEQIGIYISFLESVGFLPHPKHFGDKALPNIKISEQQKELVASGAGARSSSAA.

The Carrier domain maps to 828–905; it reads SEFNQQEREI…AFAAEVSRLK (78 aa). Ser865 carries the post-translational modification O-(pantetheine 4'-phosphoryl)serine.

Belongs to the ATP-dependent AMP-binding enzyme family. As to quaternary structure, heterodimer of an alpha and a beta subunit. The cofactor is pantetheine 4'-phosphate.

It carries out the reaction (S)-2-amino-6-oxohexanoate + NADP(+) + H2O = L-2-aminoadipate + NADPH + 2 H(+). The enzyme catalyses (S)-2-amino-6-oxohexanoate + NAD(+) + H2O = L-2-aminoadipate + NADH + 2 H(+). It catalyses the reaction (S)-2-amino-6-oxohexanoate + AMP + diphosphate + NADP(+) = L-2-aminoadipate + ATP + NADPH + H(+). The protein operates within amino-acid biosynthesis; L-lysine biosynthesis via AAA pathway; L-lysine from L-alpha-aminoadipate (fungal route): step 1/3. Catalyzes the activation of alpha-aminoadipate by ATP-dependent adenylation and the reduction of activated alpha-aminoadipate by NADPH. The activated alpha-aminoadipate is bound to the phosphopantheinyl group of the enzyme itself before it is reduced to (S)-2-amino-6-oxohexanoate. The chain is L-2-aminoadipate reductase large subunit (LYS2) from Candida glabrata (strain ATCC 2001 / BCRC 20586 / JCM 3761 / NBRC 0622 / NRRL Y-65 / CBS 138) (Yeast).